Here is a 464-residue protein sequence, read N- to C-terminus: Protein FAM90A20 (464 aa).

Disordered stretches follow at residues 16–42, 71–213, 228–247, 254–273, 309–389, and 418–437; these read RAQT…DPRL, ATLG…IPRP, PTHS…ASKT, VRTQ…CPSA, RLGP…HDGA, and EKPG…SEAP. Composition is skewed to basic and acidic residues over residues 74–83 and 97–114; these read GKKEGKENLK and NKDK…DPQR. A compositionally biased stretch (low complexity) spans 180–197; that stretch reads LASLSPLRKASLSSSSSL.

This sequence belongs to the FAM90 family.

The polypeptide is Protein FAM90A20 (Homo sapiens (Human)).